Here is a 145-residue protein sequence, read N- to C-terminus: Maximins 5/H4 type 1 (145 aa).

Positions 1–18 are cleaved as a signal peptide; it reads MNFKYIVAVSFLIASAYA. Propeptides lie at residues 19-43 and 74-124; these read RSVQ…REIR and TAEE…KEKR. The residue at position 144 (L144) is a Leucine amide.

It belongs to the bombinin family. In terms of tissue distribution, expressed by the skin glands.

It localises to the secreted. Maximin-5 shows antibacterial activity against both Gram-positive and Gram-negative bacteria. The only exception is the resistance of E.coli. Also shows antimicrobial activity against fungi C.albicans, A.flavus and P.uticale. It has little hemolytic activity. It does not possess a significant cytotoxicity against tumor cell lines. It does not possess a significant anti-HIV activity. Its function is as follows. Maximin-H4 shows antibacterial activity against both Gram-positive and Gram-negative bacteria. It also shows antimicrobial activity against the fungus C.albicans. Shows strong hemolytic activity. The polypeptide is Maximins 5/H4 type 1 (Bombina maxima (Giant fire-bellied toad)).